We begin with the raw amino-acid sequence, 785 residues long: Cadherin-7 (785 aa).

An N-terminal signal peptide occupies residues 1–27 (MKLGKVELCHFLQLIALFLCFSGMSQA). A propeptide spanning residues 28–47 (ELPRSRSKPYFQSGRSRTKR) is cleaved from the precursor. Residues 28-607 (ELPRSRSKPY…AYVLPAGLST (580 aa)) lie on the Extracellular side of the membrane. 5 Cadherin domains span residues 49–153 (WVWN…EPKF), 154–262 (LDGP…PPRF), 263–377 (PRRS…PPVF), 378–482 (SSPL…APEF), and 482–599 (FAMD…AEAY). 2 N-linked (GlcNAc...) asparagine glycosylation sites follow: Asn449 and Asn530. A helical membrane pass occupies residues 608-628 (GALIAILACVLTLLVLILLIV). Topologically, residues 629–785 (TMRRRKKEPL…YGNGQESLYS (157 aa)) are cytoplasmic.

Its subcellular location is the cell membrane. In terms of biological role, cadherins are calcium-dependent cell adhesion proteins. They preferentially interact with themselves in a homophilic manner in connecting cells; cadherins may thus contribute to the sorting of heterogeneous cell types. This Mus musculus (Mouse) protein is Cadherin-7 (Cdh7).